A 401-amino-acid polypeptide reads, in one-letter code: Nicotinate phosphoribosyltransferase (401 aa).

The residue at position 224 (His224) is a Phosphohistidine; by autocatalysis.

This sequence belongs to the NAPRTase family. Transiently phosphorylated on a His residue during the reaction cycle. Phosphorylation strongly increases the affinity for substrates and increases the rate of nicotinate D-ribonucleotide production. Dephosphorylation regenerates the low-affinity form of the enzyme, leading to product release.

It catalyses the reaction nicotinate + 5-phospho-alpha-D-ribose 1-diphosphate + ATP + H2O = nicotinate beta-D-ribonucleotide + ADP + phosphate + diphosphate. Its pathway is cofactor biosynthesis; NAD(+) biosynthesis; nicotinate D-ribonucleotide from nicotinate: step 1/1. Its function is as follows. Catalyzes the synthesis of beta-nicotinate D-ribonucleotide from nicotinate and 5-phospho-D-ribose 1-phosphate at the expense of ATP. This Pseudomonas putida (strain ATCC 700007 / DSM 6899 / JCM 31910 / BCRC 17059 / LMG 24140 / F1) protein is Nicotinate phosphoribosyltransferase.